The following is a 255-amino-acid chain: Geranylgeranylglyceryl phosphate synthase (255 aa).

Mg(2+) contacts are provided by Asp25 and Ser54. Sn-glycerol 1-phosphate contacts are provided by residues 173–179, 203–204, and 225–226; these read YLEGGSG, GG, and GT.

The protein belongs to the GGGP/HepGP synthase family. Group II subfamily. Mg(2+) serves as cofactor.

The protein resides in the cytoplasm. The enzyme catalyses sn-glycerol 1-phosphate + (2E,6E,10E)-geranylgeranyl diphosphate = sn-3-O-(geranylgeranyl)glycerol 1-phosphate + diphosphate. The protein operates within membrane lipid metabolism; glycerophospholipid metabolism. Prenyltransferase that catalyzes the transfer of the geranylgeranyl moiety of geranylgeranyl diphosphate (GGPP) to the C3 hydroxyl of sn-glycerol-1-phosphate (G1P). This reaction is the first ether-bond-formation step in the biosynthesis of archaeal membrane lipids. The chain is Geranylgeranylglyceryl phosphate synthase from Thermofilum pendens (strain DSM 2475 / Hrk 5).